Consider the following 403-residue polypeptide: Tyrosine--tRNA ligase (403 aa).

A 'HIGH' region motif is present at residues 42 to 51 (PTAPDLHLGH). The 'KMSKS' region motif lies at 226-230 (KMSKS). Lys229 provides a ligand contact to ATP. The S4 RNA-binding domain occupies 339 to 400 (LRIASLLTAA…GKRNFARVAL (62 aa)).

It belongs to the class-I aminoacyl-tRNA synthetase family. TyrS type 2 subfamily. Homodimer.

Its subcellular location is the cytoplasm. The enzyme catalyses tRNA(Tyr) + L-tyrosine + ATP = L-tyrosyl-tRNA(Tyr) + AMP + diphosphate + H(+). Catalyzes the attachment of tyrosine to tRNA(Tyr) in a two-step reaction: tyrosine is first activated by ATP to form Tyr-AMP and then transferred to the acceptor end of tRNA(Tyr). The polypeptide is Tyrosine--tRNA ligase (Xanthomonas campestris pv. campestris (strain ATCC 33913 / DSM 3586 / NCPPB 528 / LMG 568 / P 25)).